The following is a 952-amino-acid chain: Calsyntenin-1 (952 aa).

A signal peptide spans 1-28 (MLRRPAPALARAVRLLLAGLLYGGGVWA). Residues 29-830 (ARVNKHKPWL…PHPFAVVPST (802 aa)) lie on the Extracellular side of the membrane. Cadherin domains lie at 38 to 154 (LEPT…APVF) and 155 to 255 (KEKS…SPGW). Asn-356 carries N-linked (GlcNAc...) asparagine glycosylation. A helical transmembrane segment spans residues 831 to 851 (ATVVIVVCVSFLVFMIILGVF). Residues 852 to 952 (RIRAAHQRTM…LEWDYSTLSY (101 aa)) are Cytoplasmic-facing. The segment at 886–952 (METYEDQHSS…LEWDYSTLSY (67 aa)) is disordered. Acidic residues predominate over residues 896-930 (EEEEEEEEEEESEDGEEEEDITSAESESSEEEEGG). Polar residues predominate over residues 934 to 952 (GQNTTRQQQLEWDYSTLSY).

Belongs to the calsyntenin family. As to quaternary structure, directly interacts with APBA2. Forms a tripartite complex with APBA2 and APP. Interacts with KLC1. Interacts with APBB1; this interaction stabilizes AlcICD metabolism. In terms of assembly, interacts with PSEN1. In terms of processing, proteolytically processed under normal cellular conditions. A primary zeta-cleavage generates a large extracellular (soluble) N-terminal domain (sAlc) and a short C-terminal transmembrane fragment (CTF1). A secondary cleavage catalyzed by presenilin gamma-secretase within the transmembrane domain releases the beta-Alc-alpha chain in the extracellular milieu and produces an intracellular fragment (AlcICD). This processing is strongly suppressed in the tripartite complex formed with APBA2 and APP, which seems to prevent the association with PSEN1. In terms of tissue distribution, preferentially expressed in the retina and brain.

The protein localises to the postsynaptic cell membrane. It localises to the endoplasmic reticulum membrane. It is found in the golgi apparatus membrane. Its subcellular location is the cell projection. The protein resides in the neuron projection. The protein localises to the nucleus. Postsynaptic adhesion molecule that binds to presynaptic neurexins to mediate both excitatory and inhibitory synapse formation. Promotes synapse development by acting as a cell adhesion molecule at the postsynaptic membrane, which associates with neurexin-alpha at the presynaptic membrane. Also functions as a cargo in axonal anterograde transport by acting as a molecular adapter that promotes KLC1 association with vesicles. Complex formation with APBA2 and APP, stabilizes APP metabolism and enhances APBA2-mediated suppression of beta-APP40 secretion, due to the retardation of intracellular APP maturation. In terms of biological role, as intracellular fragment AlcICD, suppresses APBB1-dependent transactivation stimulated by APP C-terminal intracellular fragment (AICD), most probably by competing with AICD for APBB1-binding. Its function is as follows. In complex with APBA2 and C99, a C-terminal APP fragment, abolishes C99 interaction with PSEN1 and thus APP C99 cleavage by gamma-secretase, most probably through stabilization of the direct interaction between APBA2 and APP. This is Calsyntenin-1 (Clstn1) from Rattus norvegicus (Rat).